The sequence spans 348 residues: Outer membrane protein A (348 aa).

Residues 1-21 form the signal peptide; sequence MKKTAIAIAVALAGFATVAQA. The next 8 beta stranded transmembrane spans lie at 27-37, 55-66, 70-78, 96-107, 112-120, 146-155, 160-167, and 186-194; these read TWYTGAKLGWS, QLGAGAFGGYQV, VGFEMGYDW, QGVQLTAKLGYP, LDIYTRLGG, PVFAGGVEYA, IATRLEYQ, and LLSLGVSYR. The interval 201–210 is hinge-like; that stretch reads APVVAPAPAP. 3 consecutive repeat copies span residues 205–206, 207–208, and 209–210. Residues 205–210 are 3 X 2 AA tandem repeats of A-P; sequence APAPAP. One can recognise an OmpA-like domain in the interval 212–340; that stretch reads VQTKHFTLKS…RVEIEVKGIK (129 aa). A disulfide bridge connects residues Cys313 and Cys325.

This sequence belongs to the outer membrane OOP (TC 1.B.6) superfamily. OmpA family. Monomer and homodimer. As to quaternary structure, (Microbial infection) Upon infection with phage Sf6 associates with the mature bacteriophage capsid. Was originally suggested to be within the bacteriophage capsid. This has been disproven.

It localises to the extracellular vesicle. The protein localises to the cell outer membrane. Its function is as follows. With TolR probably plays a role in maintaining the position of the peptidoglycan cell wall in the periplasm. Acts as a porin with low permeability that allows slow penetration of small solutes; an internal gate slows down solute passage. Functionally, required for conjugation with F-type plasmids; probably serves as the mating receptor on recipient cells. (Microbial infection) Serves as a secondary receptor during phage Sf6 infection; infection requires both lipopolysaccharide (LPS) and the OmpA beta-barrel. The protein is Outer membrane protein A of Shigella flexneri.